The chain runs to 366 residues: Inhibin alpha chain (366 aa).

An N-terminal signal peptide occupies residues 1–20 (MVSQRSLLLLLLLTLRDVDS). A propeptide spanning residues 21 to 63 (CQGPELVRELVLAKVKALFLDALGPPAMDGEGGDPGIRRLPRR) is cleaved from the precursor. A propeptide spans 64–233 (HAVGGFMHRT…APSAGERARR (170 aa)) (inhibin alpha N-terminal region). 2 N-linked (GlcNAc...) asparagine glycosylation sites follow: asparagine 147 and asparagine 269. Cystine bridges form between cysteine 263–cysteine 328, cysteine 292–cysteine 363, and cysteine 296–cysteine 365.

The protein belongs to the TGF-beta family. Dimeric, linked by one or more disulfide bonds. Activin B is a dimer of alpha and beta-B. Inhibin A is a dimer of alpha and beta-A. Inhibin B is a dimer of alpha and beta-B. Interacts with TGFBR3L; this interaction regulates female fertility. Post-translationally, proteolytic processing yields a number of bioactive forms, consisting either solely of the mature alpha chain, of the most N-terminal propeptide linked through a disulfide bond to the mature alpha chain, or of the entire proprotein.

It is found in the secreted. In terms of biological role, inhibins and activins inhibit and activate, respectively, the secretion of follitropin by the pituitary gland. Inhibins/activins are involved in regulating a number of diverse functions such as hypothalamic and pituitary hormone secretion, gonadal hormone secretion, germ cell development and maturation, erythroid differentiation, insulin secretion, nerve cell survival, embryonic axial development or bone growth, depending on their subunit composition. Inhibins appear to oppose the functions of activins. Inhibin A is a dimer of alpha/INHA and beta-A/INHBA that functions as a feedback regulator in the hypothalamic-pituitary-gonadal (HPG) axis. Inhibits the secretion of FSH from the anterior pituitary gland by acting on pituitary gonadotrope cells. Antagonizes activin A by binding to the proteoglycan, betaglycan, and forming a stable complex with and, thereby, sequestering type II activin receptors while excluding type I receptor. Functionally, inhibin B is a dimer of alpha and beta-B that plays a crucial role in the regulation of the reproductive system by inhibiting the secretion of follicle-stimulating hormone (FSH) from the anterior pituitary gland. Thereby, maintains reproductive homeostasis in both males and females. Acts as a more potent suppressor of FSH release than inhibin A. Functions as competitive receptor antagonist binding activin type II receptors with high affinity in the presence of the TGF-beta type III coreceptor/TGFBR3L. The polypeptide is Inhibin alpha chain (Inha) (Mus musculus (Mouse)).